We begin with the raw amino-acid sequence, 65 residues long: Alpha-toxin OD1 (65 aa).

In terms of domain architecture, LCN-type CS-alpha/beta spans 3 to 65 (RDAYIADDKN…VPIRIPGKCR (63 aa)). The short motif at 9 to 11 (DDK) is the Important for toxin selectivity for individual Nav channel subtype (Nav1.6/SCN8A and Nav1.7/SCN9A), but not for toxin potency element. 4 disulfides stabilise this stretch: Cys-13-Cys-64, Cys-17-Cys-37, Cys-23-Cys-47, and Cys-27-Cys-49. An Arginine amide modification is found at Arg-65.

This sequence belongs to the long (4 C-C) scorpion toxin superfamily. Sodium channel inhibitor family. Alpha subfamily. In terms of tissue distribution, expressed by the venom gland.

It localises to the secreted. In terms of biological role, alpha toxins bind voltage-independently at site-3 of sodium channels and inhibit the inactivation of the activated channels. The toxin affect mammalian sodium channels Nav1.7/SCN9A (EC(50)=4.5 nM), Nav1.4/SCN4A (EC(50)=9.6 nM), Nav1.6/SCN8A (EC(50)=30 nM), Nav1.5/SCN5A (only at micromolar concentrations), and insect sodium channel para/tipE (EC(50)=80 nM). In vivo, intraplantar administration of this toxin elicits pain behaviors, including licking and flinching of the hind paw. This is Alpha-toxin OD1 from Odontobuthus doriae (Yellow Iranian scorpion).